We begin with the raw amino-acid sequence, 434 residues long: Glutamate-1-semialdehyde 2,1-aminomutase 1 (434 aa).

Lysine 268 is modified (N6-(pyridoxal phosphate)lysine).

The protein belongs to the class-III pyridoxal-phosphate-dependent aminotransferase family. HemL subfamily. Homodimer. Requires pyridoxal 5'-phosphate as cofactor.

It localises to the cytoplasm. It carries out the reaction (S)-4-amino-5-oxopentanoate = 5-aminolevulinate. It functions in the pathway porphyrin-containing compound metabolism; protoporphyrin-IX biosynthesis; 5-aminolevulinate from L-glutamyl-tRNA(Glu): step 2/2. The protein is Glutamate-1-semialdehyde 2,1-aminomutase 1 of Shouchella clausii (strain KSM-K16) (Alkalihalobacillus clausii).